The chain runs to 115 residues: Large ribosomal subunit protein bL19 (115 aa).

Belongs to the bacterial ribosomal protein bL19 family.

This protein is located at the 30S-50S ribosomal subunit interface and may play a role in the structure and function of the aminoacyl-tRNA binding site. The polypeptide is Large ribosomal subunit protein bL19 (Buchnera aphidicola subsp. Cinara cedri (strain Cc)).